A 321-amino-acid chain; its full sequence is MTQNTFFSLFPHQHLLGIKDLSVQDLTILLDRANANVPFLKKSDKKQSILHGRTQINLFFEASTRTQSSFELAGKRLGADVMSMAIGNSSVKKGETLVDTATTLNAMKPDILVIRHSCAGAAALLAQKVDCCVINAGDGAHEHPTQALLDALTIQRTKGRIEGLTVAICGDILHSRVARSNILSLNALGACVRVIAPSTLLPASIADMSVEVYNTMKEGLKGADVIMMLRLQQERMTGSFIPSIREYFHYFGLHKENLAYAKSDCIILHPGPINRGVEIASDIADGPQSMIHTQVEMGIAVRMAVMEALLDSRLKASGEKK.

Residues Arg-65 and Thr-66 each contribute to the carbamoyl phosphate site. Lys-93 provides a ligand contact to L-aspartate. Carbamoyl phosphate contacts are provided by Arg-115, His-143, and Gln-146. L-aspartate-binding residues include Arg-176 and Arg-230. The carbamoyl phosphate site is built by Gly-271 and Pro-272.

It belongs to the aspartate/ornithine carbamoyltransferase superfamily. ATCase family. In terms of assembly, heterododecamer (2C3:3R2) of six catalytic PyrB chains organized as two trimers (C3), and six regulatory PyrI chains organized as three dimers (R2).

The catalysed reaction is carbamoyl phosphate + L-aspartate = N-carbamoyl-L-aspartate + phosphate + H(+). It functions in the pathway pyrimidine metabolism; UMP biosynthesis via de novo pathway; (S)-dihydroorotate from bicarbonate: step 2/3. In terms of biological role, catalyzes the condensation of carbamoyl phosphate and aspartate to form carbamoyl aspartate and inorganic phosphate, the committed step in the de novo pyrimidine nucleotide biosynthesis pathway. The sequence is that of Aspartate carbamoyltransferase catalytic subunit from Bartonella henselae (strain ATCC 49882 / DSM 28221 / CCUG 30454 / Houston 1) (Rochalimaea henselae).